A 944-amino-acid polypeptide reads, in one-letter code: Isoleucine--tRNA ligase (944 aa).

The 'HIGH' region motif lies at 58–68 (PYANGDIHIGH). Position 568 (Glu568) interacts with L-isoleucyl-5'-AMP. Positions 609–613 (KMSKS) match the 'KMSKS' region motif. ATP is bound at residue Lys612. Zn(2+)-binding residues include Cys907, Cys910, Cys927, and Cys930.

This sequence belongs to the class-I aminoacyl-tRNA synthetase family. IleS type 1 subfamily. In terms of assembly, monomer. Zn(2+) is required as a cofactor.

It localises to the cytoplasm. The catalysed reaction is tRNA(Ile) + L-isoleucine + ATP = L-isoleucyl-tRNA(Ile) + AMP + diphosphate. In terms of biological role, catalyzes the attachment of isoleucine to tRNA(Ile). As IleRS can inadvertently accommodate and process structurally similar amino acids such as valine, to avoid such errors it has two additional distinct tRNA(Ile)-dependent editing activities. One activity is designated as 'pretransfer' editing and involves the hydrolysis of activated Val-AMP. The other activity is designated 'posttransfer' editing and involves deacylation of mischarged Val-tRNA(Ile). This Psychromonas ingrahamii (strain DSM 17664 / CCUG 51855 / 37) protein is Isoleucine--tRNA ligase.